The sequence spans 37 residues: Cytochrome b6-f complex subunit 7 (37 aa).

A helical transmembrane segment spans residues 11 to 29 (AVLLMVLVLVGLAWGFLLL).

The protein belongs to the PetM family. As to quaternary structure, the 4 large subunits of the cytochrome b6-f complex are cytochrome b6, subunit IV (17 kDa polypeptide, PetD), cytochrome f and the Rieske protein, while the 4 small subunits are PetG, PetL, PetM and PetN. The complex functions as a dimer.

Its subcellular location is the cellular thylakoid membrane. In terms of biological role, component of the cytochrome b6-f complex, which mediates electron transfer between photosystem II (PSII) and photosystem I (PSI), cyclic electron flow around PSI, and state transitions. This Rippkaea orientalis (strain PCC 8801 / RF-1) (Cyanothece sp. (strain PCC 8801)) protein is Cytochrome b6-f complex subunit 7.